A 387-amino-acid chain; its full sequence is Putative transmembrane protein At3g54730 (387 aa).

Residues Pro-10–Ala-25 are compositionally biased toward pro residues. Residues Pro-10–Pro-45 are disordered. The next 8 helical transmembrane spans lie at Val-97–Val-117, Gly-128–Phe-148, Val-154–Leu-174, Val-186–Ile-206, Ile-221–Ile-241, Ser-292–Glu-312, Phe-335–Phe-355, and Pro-362–Phe-382.

It is found in the membrane. This is Putative transmembrane protein At3g54730 from Arabidopsis thaliana (Mouse-ear cress).